Here is a 180-residue protein sequence, read N- to C-terminus: ATP-dependent protease subunit HslV (180 aa).

Residue Thr8 is part of the active site. The Na(+) site is built by Gly165, Asp168, and Thr171.

The protein belongs to the peptidase T1B family. HslV subfamily. As to quaternary structure, a double ring-shaped homohexamer of HslV is capped on each side by a ring-shaped HslU homohexamer. The assembly of the HslU/HslV complex is dependent on binding of ATP.

It is found in the cytoplasm. The enzyme catalyses ATP-dependent cleavage of peptide bonds with broad specificity.. Its activity is regulated as follows. Allosterically activated by HslU binding. Protease subunit of a proteasome-like degradation complex believed to be a general protein degrading machinery. This Lactiplantibacillus plantarum (strain ATCC BAA-793 / NCIMB 8826 / WCFS1) (Lactobacillus plantarum) protein is ATP-dependent protease subunit HslV.